We begin with the raw amino-acid sequence, 189 residues long: UPF0340 protein SAG0103 (189 aa).

The protein belongs to the UPF0340 family.

This Streptococcus agalactiae serotype V (strain ATCC BAA-611 / 2603 V/R) protein is UPF0340 protein SAG0103.